Here is a 538-residue protein sequence, read N- to C-terminus: Carotenoid 9,10(9',10')-cleavage dioxygenase 1 (538 aa).

Residues His-222, His-270, His-336, and His-523 each contribute to the Fe cation site.

It belongs to the carotenoid oxygenase family. As to quaternary structure, homodimer. It depends on Fe(2+) as a cofactor. In terms of tissue distribution, high expression in flowers and siliques. Also detected in stems, leaves and roots.

The protein resides in the cytoplasm. The catalysed reaction is all-trans-zeaxanthin + 2 O2 = 4,9-dimethyldodeca-2,4,6,8,10-pentaenedial + 2 (3R)-hydroxy-beta-ionone. Functionally, cleaves a variety of carotenoids symmetrically at both the 9-10 and 9'-10' double bonds. Active on beta,beta-carotene, lutein, zeaxanthin, all-trans-violaxanthin, 9-cis-violaxanthin and 9'-cis-neoxanthin. With most substrates, the carotenoid is symmetrically cleaved. Probably not involved in abscisic acid biosynthesis. This Arabidopsis thaliana (Mouse-ear cress) protein is Carotenoid 9,10(9',10')-cleavage dioxygenase 1 (CCD1).